The primary structure comprises 225 residues: MPFDARTRPLTAPQARVLATLLEKSRTVPDSYPLTLNSLLAGCNQKSSRDPVMQLTESEVQQALDELRQQTLVLEIGGARVARWEHNFTRGVGVPDQSAALLGLLMLRGPQTAGELRINAERWHRFADISSVEAFLDELQSRSDDKGGPLVTLLPRAPGAREPRWAHLLCGPVDASLAQMASASPASRSEEDGALAQRVQALEDEVAALRATVQRLCEQLGVAEH.

This sequence belongs to the UPF0502 family.

The chain is UPF0502 protein Ajs_3392 from Acidovorax sp. (strain JS42).